The chain runs to 313 residues: Biotin synthase (313 aa).

The Radical SAM core domain maps to 28-258 (NFGNDIELCS…LFPQARLRLS (231 aa)). [4Fe-4S] cluster-binding residues include cysteine 46, cysteine 50, and cysteine 53. The [2Fe-2S] cluster site is built by cysteine 90, cysteine 121, cysteine 181, and arginine 256.

This sequence belongs to the radical SAM superfamily. Biotin synthase family. In terms of assembly, homodimer. The cofactor is [4Fe-4S] cluster. [2Fe-2S] cluster is required as a cofactor.

The catalysed reaction is (4R,5S)-dethiobiotin + (sulfur carrier)-SH + 2 reduced [2Fe-2S]-[ferredoxin] + 2 S-adenosyl-L-methionine = (sulfur carrier)-H + biotin + 2 5'-deoxyadenosine + 2 L-methionine + 2 oxidized [2Fe-2S]-[ferredoxin]. Its pathway is cofactor biosynthesis; biotin biosynthesis; biotin from 7,8-diaminononanoate: step 2/2. Its function is as follows. Catalyzes the conversion of dethiobiotin (DTB) to biotin by the insertion of a sulfur atom into dethiobiotin via a radical-based mechanism. The protein is Biotin synthase of Francisella tularensis subsp. holarctica (strain FTNF002-00 / FTA).